A 400-amino-acid chain; its full sequence is CinA-like protein (400 aa).

This sequence belongs to the CinA family.

This Sulfurihydrogenibium sp. (strain YO3AOP1) protein is CinA-like protein.